The primary structure comprises 255 residues: Adenosine 5'-phosphosulfate reductase (255 aa).

The disordered stretch occupies residues 1–39 (MMTAEVRTPEQGGGPLTTEPRAPRSAPGHADASAPAFGP). Residues Cys137, Cys138, Cys220, and Cys223 each contribute to the [4Fe-4S] cluster site. The active-site Nucleophile; cysteine thiosulfonate intermediate is the Cys246.

Belongs to the PAPS reductase family. CysH subfamily. Requires [4Fe-4S] cluster as cofactor.

Its subcellular location is the cytoplasm. The enzyme catalyses [thioredoxin]-disulfide + sulfite + AMP + 2 H(+) = adenosine 5'-phosphosulfate + [thioredoxin]-dithiol. The protein operates within sulfur metabolism; hydrogen sulfide biosynthesis; sulfite from sulfate. Its function is as follows. Catalyzes the formation of sulfite from adenosine 5'-phosphosulfate (APS) using thioredoxin as an electron donor. The chain is Adenosine 5'-phosphosulfate reductase from Deinococcus radiodurans (strain ATCC 13939 / DSM 20539 / JCM 16871 / CCUG 27074 / LMG 4051 / NBRC 15346 / NCIMB 9279 / VKM B-1422 / R1).